Consider the following 544-residue polypeptide: Membrane protein insertase YidC (544 aa).

Transmembrane regions (helical) follow at residues L13–L33, W343–F363, L409–V429, L461–L481, and M506–I526.

It belongs to the OXA1/ALB3/YidC family. Type 1 subfamily. As to quaternary structure, interacts with the Sec translocase complex via SecD. Specifically interacts with transmembrane segments of nascent integral membrane proteins during membrane integration.

It is found in the cell inner membrane. Required for the insertion and/or proper folding and/or complex formation of integral membrane proteins into the membrane. Involved in integration of membrane proteins that insert both dependently and independently of the Sec translocase complex, as well as at least some lipoproteins. Aids folding of multispanning membrane proteins. The sequence is that of Membrane protein insertase YidC from Borreliella burgdorferi (strain ATCC 35210 / DSM 4680 / CIP 102532 / B31) (Borrelia burgdorferi).